We begin with the raw amino-acid sequence, 319 residues long: Acetyl-coenzyme A carboxylase carboxyl transferase subunit alpha (319 aa).

One can recognise a CoA carboxyltransferase C-terminal domain in the interval 32-293 (NVDTEVRALE…KAVLLNELEA (262 aa)).

The protein belongs to the AccA family. As to quaternary structure, acetyl-CoA carboxylase is a heterohexamer composed of biotin carboxyl carrier protein (AccB), biotin carboxylase (AccC) and two subunits each of ACCase subunit alpha (AccA) and ACCase subunit beta (AccD).

The protein localises to the cytoplasm. The catalysed reaction is N(6)-carboxybiotinyl-L-lysyl-[protein] + acetyl-CoA = N(6)-biotinyl-L-lysyl-[protein] + malonyl-CoA. The protein operates within lipid metabolism; malonyl-CoA biosynthesis; malonyl-CoA from acetyl-CoA: step 1/1. Component of the acetyl coenzyme A carboxylase (ACC) complex. First, biotin carboxylase catalyzes the carboxylation of biotin on its carrier protein (BCCP) and then the CO(2) group is transferred by the carboxyltransferase to acetyl-CoA to form malonyl-CoA. In Xylella fastidiosa (strain 9a5c), this protein is Acetyl-coenzyme A carboxylase carboxyl transferase subunit alpha.